Here is a 617-residue protein sequence, read N- to C-terminus: Sodium-coupled monocarboxylate transporter 2 (617 aa).

Over 1-5 (MEVKN) the chain is Extracellular. Residues 6-26 (FAVWDYVVFAALFIISSGIGV) form a helical membrane-spanning segment. Over 27–47 (FYAIKERKKATSREFLVGGRQ) the chain is Cytoplasmic. A helical transmembrane segment spans residues 48-68 (MSFGPVALSLTASFMSAVTVL). Residues 69 to 80 (GTPADVYRFGAS) are Extracellular-facing. Residues 81–101 (FVLFFITYGLVIILTSELFLP) form a helical membrane-spanning segment. The Cytoplasmic portion of the chain corresponds to 102–128 (VFYRSGITSTYEYLQLRFNKPVRYAAT). A helical membrane pass occupies residues 129–149 (VIYIVQTILYTGVVVYAPALA). The Extracellular segment spans residues 150–157 (LNQVTGFD). The helical transmembrane segment at 158 to 178 (LWGSVFATGIVCTFYCTLGGL) threads the bilayer. Residues 179–180 (KA) lie on the Cytoplasmic side of the membrane. A helical membrane pass occupies residues 181–201 (VVWTDAFQMVVMIVGFLTVLI). At 202-235 (QGSTYAGGLHNVLEQAENGSRLNIFDFDIDPLRR) the chain is on the extracellular side. The N-linked (GlcNAc...) asparagine glycan is linked to Asn-219. The helical transmembrane segment at 236 to 256 (HTFWTISVGGTFTWLGIYGVN) threads the bilayer. The Cytoplasmic portion of the chain corresponds to 257–273 (QSTIQRCISCKTEKHAK). A helical membrane pass occupies residues 274–294 (LALYFNLLGLWIILLCAVFSG). Topologically, residues 295–334 (LTMYAHFKDCDPWTSGIISAPDQLMPYFVMELFSTMPGLP) are extracellular. Residues 335–357 (GLFVACAFSGTLSTVAASINALA) form a helical membrane-spanning segment. At 358–385 (TVTFEDFVKSCFPRLSDKLSTWISKGLC) the chain is on the cytoplasmic side. A helical transmembrane segment spans residues 386–406 (LLFGVICTSTAVAASLMGGVI). Residues 407–411 (QAALS) are Extracellular-facing. Residues 412–432 (IHGMCGGPMLGLFSLGILFPF) traverse the membrane as a helical segment. Over 433–437 (VNWKG) the chain is Cytoplasmic. A helical transmembrane segment spans residues 438–458 (ALAGLLTGILLSFWVAIGAFI). Over 459-507 (YPAPASKTWPLPLSTDQCGLSNVTESVPPVLSSRPAIAETWYALSYLHY) the chain is Extracellular. The N-linked (GlcNAc...) asparagine glycan is linked to Asn-480. A helical transmembrane segment spans residues 508–528 (STVGCLGCIAAGVIISFLTGL). Topologically, residues 529–617 (QKGKDIPPLL…NMALEKITHF (89 aa)) are cytoplasmic.

Belongs to the sodium:solute symporter (SSF) (TC 2.A.21) family.

Its subcellular location is the apical cell membrane. It carries out the reaction (S)-lactate(out) + Na(+)(out) = (S)-lactate(in) + Na(+)(in). The catalysed reaction is nicotinate(out) + Na(+)(out) = nicotinate(in) + Na(+)(in). The enzyme catalyses pyruvate(out) + Na(+)(out) = pyruvate(in) + Na(+)(in). It catalyses the reaction propanoate(out) + Na(+)(out) = propanoate(in) + Na(+)(in). It carries out the reaction butanoate(out) + Na(+)(out) = butanoate(in) + Na(+)(in). The catalysed reaction is acetoacetate(out) + Na(+)(out) = acetoacetate(in) + Na(+)(in). In terms of biological role, acts as an electroneutral and low-affinity sodium (Na(+))-dependent sodium-coupled solute transporter. Catalyzes the transport across the plasma membrane of many monocarboxylates such as lactate, pyruvate, nicotinate, propionate, butyrate and beta-D-hydroxybutyrate. May be responsible for the first step of reabsorption of monocarboxylates from the lumen of the proximal tubule of the kidney and the small intestine. May play also a role in monocarboxylates transport in the retina. Mediates electroneutral uptake of lactate, with a stoichiometry of 2 Na(+) for each lactate. This is Sodium-coupled monocarboxylate transporter 2 (SLC5A12) from Bos taurus (Bovine).